A 1255-amino-acid polypeptide reads, in one-letter code: Membrane-associated guanylate kinase, WW and PDZ domain-containing protein 1 (1255 aa).

Residues 17-105 (ECTVKRGPQG…AVTFKAVRQG (89 aa)) enclose the PDZ 1 domain. In terms of domain architecture, Guanylate kinase-like spans 96 to 287 (AVTFKAVRQG…APITDPSQKF (192 aa)). An ATP-binding site is contributed by 103 to 110 (RQGGRLNK). 2 disordered regions span residues 208–227 (HSLQSGSKQSTPKRTKSYND) and 235–265 (HTENEEEEDVPEMNSSFTADSGDQDEPTLQE). Residues 300–333 (GPLPENWEMAYTENGEVYFIDHNAKTTSWLDPRC) enclose the WW 1 domain. At Ser357 the chain carries Phosphoserine. Residues 359 to 392 (LELPAGWEKIEDPVYGVYYVDHINRKTQYENPVL) form the WW 2 domain. The segment at 395–462 (KRKRQLEQQQ…QGKPFFTRNP (68 aa)) is disordered. Over residues 402-414 (QQQQQQQHQQQPQ) the composition is skewed to low complexity. Pro residues predominate over residues 434–444 (PVAPSHPPSNP). The 83-residue stretch at 471–553 (HTKLRKSSRG…GASVDLELCR (83 aa)) folds into the PDZ 2 domain. The segment covering 585 to 601 (QETYDSPASHSSKTGKV) has biased composition (polar residues). Disordered stretches follow at residues 585–622 (QETYDSPASHSSKTGKVSNMKDARPSSPADVASNSSHG) and 719–820 (QRGG…GERD). Residues 642-720 (TVHIVKGPMG…GSEVTLLVQR (79 aa)) enclose the PDZ 3 domain. 2 positions are modified to phosphoserine: Ser729 and Ser740. Positions 741-755 (QNSSQHSVSSLRSLH) are enriched in low complexity. Ser799 is modified (phosphoserine). Residues 840-922 (DIFLWRKETG…QGHVNLTVRR (83 aa)) form the PDZ 4 domain. The segment at 932–984 (ENEVPSPASSHHSSNQPASLTEEKRTPQGSQNSLNTVSSGSGSTSGIGSGGGG) is disordered. Polar residues-rich tracts occupy residues 938–950 (PASSHHSSNQPAS) and 958–967 (PQGSQNSLNT). A compositionally biased stretch (gly residues) spans 974-984 (STSGIGSGGGG). Positions 997 to 1093 (DVEIRRGENE…TVTLRIIPGD (97 aa)) constitute a PDZ 5 domain. Ser1070 bears the Phosphoserine mark. A compositionally biased stretch (polar residues) spans 1111–1129 (TTTHAPSQQGTQETRTTTK). Residues 1111–1142 (TTTHAPSQQGTQETRTTTKPKPDSQFEFKGPQ) form a disordered region. One can recognise a PDZ 6 domain in the interval 1151–1233 (TVELERGAKG…RVRLFLRRGD (83 aa)).

Part of a complex composed of AMOTL2, MAGI1 and CDH5, within the complex AMOTL2 acts as a scaffold protein for the interaction of MAGI1 with CDH5. The complex is required for coupling actin fibers to cell junctions in endothelial cells. Interacts through its WW 2 domain with SYNPO and through its PDZ 5 domain with ACTN4. Interacts with cytoplasmic domain of ADGRB1. Interacts via its WW domains with DRPLA. Interacts with ESAM, LRP2 and CXADR. May interact with CTNNB1. Interacts through its PDZ 1 domain with NET1. Interacts with ASIC3 and AMOT. Interacts with FCHSD2. Interacts with IGSF5/JAM4 and through its PDZ 2 and 3 domains with NPHS1 forming a tripartite complex. Interacts with DDN. May interact (via PDZ domain) with RAPGEF2. Interacts with DLL1. Interacts with KCNJ10 and possibly with KCNJ10/KCNJ16 heterodimer; this interaction may facilitate KCNJ10/KCNJ16 potassium channel expression at the basolateral membrane in kidney tubular cells. Interacts with PRRG4 (via cytoplasmic domain).

Its subcellular location is the cell junction. The protein resides in the tight junction. It is found in the cytoplasm. It localises to the membrane. Its function is as follows. Plays a role in coupling actin fibers to cell junctions in endothelial cells, via its interaction with AMOTL2 and CDH5. May regulate acid-induced ASIC3 currents by modulating its expression at the cell surface. This Rattus norvegicus (Rat) protein is Membrane-associated guanylate kinase, WW and PDZ domain-containing protein 1 (Magi1).